The primary structure comprises 199 residues: Signal peptidase complex subunit 2 (199 aa).

Topologically, residues 1 to 49 (MGKKDEKSQQGEELVKVNKWDGSAVKHALDDAVKTCLLGDRPQLKEQFG) are cytoplasmic. A helical transmembrane segment spans residues 50 to 72 (LVNTRLALCALAVSVAIMAHAWD). At 73–81 (FTHPFPESR) the chain is on the lumenal side. The chain crosses the membrane as a helical span at residues 82 to 104 (PVLLFSVLAYFALLGILTLHSSF). Residues 105-199 (REKGTFAVAL…KKNASSLSSN (95 aa)) are Cytoplasmic-facing.

It belongs to the SPCS2 family. In terms of assembly, component of the signal peptidase complex (SPC) composed of a catalytic subunit twr/SEC11 and three accessory subunits Spase12/SPCS1, Spase25/SPCS2 and Spase22-23/SPCS3. The complex induces a local thinning of the ER membrane which is used to measure the length of the signal peptide (SP) h-region of protein substrates. This ensures the selectivity of the complex towards h-regions shorter than 18-20 amino acids.

Its subcellular location is the endoplasmic reticulum membrane. In terms of biological role, component of the signal peptidase complex (SPC) which catalyzes the cleavage of N-terminal signal sequences from nascent proteins as they are translocated into the lumen of the endoplasmic reticulum. Enhances the enzymatic activity of SPC and facilitates the interactions between different components of the translocation site. This Drosophila melanogaster (Fruit fly) protein is Signal peptidase complex subunit 2 (Spase25).